A 198-amino-acid chain; its full sequence is Endonuclease V (198 aa).

Residues D38 and D101 each coordinate Mg(2+).

It belongs to the endonuclease V family. It depends on Mg(2+) as a cofactor.

Its subcellular location is the cytoplasm. The enzyme catalyses Endonucleolytic cleavage at apurinic or apyrimidinic sites to products with a 5'-phosphate.. DNA repair enzyme involved in the repair of deaminated bases. Selectively cleaves double-stranded DNA at the second phosphodiester bond 3' to a deoxyinosine leaving behind the intact lesion on the nicked DNA. The sequence is that of Endonuclease V from Saccharolobus islandicus (strain M.16.27) (Sulfolobus islandicus).